Consider the following 202-residue polypeptide: Oxopyrrolidines biosynthesis cluster protein O (202 aa).

Functionally, part of the gene cluster that mediates the biosynthesis of oxopyrrolidines, polyketide-amino acid hybrid compounds with feature structures of tetramic acid. Does not seem to play a role in oxopyrrolidines A and B biosynthesis. The chain is Oxopyrrolidines biosynthesis cluster protein O from Penicillium oxalicum (strain 114-2 / CGMCC 5302) (Penicillium decumbens).